The following is a 131-amino-acid chain: Small ribosomal subunit protein uS11 (131 aa).

This sequence belongs to the universal ribosomal protein uS11 family. Part of the 30S ribosomal subunit. Interacts with proteins S7 and S18. Binds to IF-3.

Functionally, located on the platform of the 30S subunit, it bridges several disparate RNA helices of the 16S rRNA. Forms part of the Shine-Dalgarno cleft in the 70S ribosome. This is Small ribosomal subunit protein uS11 from Helicobacter pylori (strain Shi470).